Here is a 142-residue protein sequence, read N- to C-terminus: Hemoglobin subunit alpha-1 (142 aa).

In terms of domain architecture, Globin spans 2 to 142 (VLSAADKSNV…VSTVLTSKYR (141 aa)). Position 59 (His-59) interacts with O2. His-88 is a binding site for heme b.

This sequence belongs to the globin family. As to quaternary structure, heterotetramer of two alpha chains and two beta chains.

In terms of biological role, involved in oxygen transport from the lung to the various peripheral tissues. Its function is as follows. Hemopressin acts as an antagonist peptide of the cannabinoid receptor CNR1. Hemopressin-binding efficiently blocks cannabinoid receptor CNR1 and subsequent signaling. In Capra hircus (Goat), this protein is Hemoglobin subunit alpha-1 (HBA1).